The primary structure comprises 90 residues: Electron transfer flavoprotein regulatory factor 1 (90 aa).

Belongs to the complex I LYR family. As to quaternary structure, homotetramer. Interacts with NDUFAB1. Interacts with ETFA. Interacts with ETFB.

The protein resides in the mitochondrion. Acts as a regulator of the electron transfer flavoprotein by promoting the removal of flavin from the ETF holoenzyme (composed of ETFA and ETFB). This Homo sapiens (Human) protein is Electron transfer flavoprotein regulatory factor 1.